Consider the following 44-residue polypeptide: Thymosin beta-10 (44 aa).

Belongs to the thymosin beta family.

The protein resides in the cytoplasm. Its subcellular location is the cytoskeleton. Plays an important role in the organization of the cytoskeleton. Binds to and sequesters actin monomers (G actin) and therefore inhibits actin polymerization. The sequence is that of Thymosin beta-10 from Torpedo marmorata (Marbled electric ray).